The following is a 165-amino-acid chain: Peptide methionine sulfoxide reductase MsrA (165 aa).

Residue C11 is part of the active site.

It belongs to the MsrA Met sulfoxide reductase family.

The enzyme catalyses L-methionyl-[protein] + [thioredoxin]-disulfide + H2O = L-methionyl-(S)-S-oxide-[protein] + [thioredoxin]-dithiol. The catalysed reaction is [thioredoxin]-disulfide + L-methionine + H2O = L-methionine (S)-S-oxide + [thioredoxin]-dithiol. Its function is as follows. Has an important function as a repair enzyme for proteins that have been inactivated by oxidation. Catalyzes the reversible oxidation-reduction of methionine sulfoxide in proteins to methionine. In Ureaplasma parvum serovar 3 (strain ATCC 27815 / 27 / NCTC 11736), this protein is Peptide methionine sulfoxide reductase MsrA.